A 371-amino-acid polypeptide reads, in one-letter code: Protein SOMBRERO (371 aa).

The NAC domain maps to V17–K166. Residues I118–G172 mediate DNA binding. Disordered regions lie at residues E176 to H213 and V316 to F355. Residues N192–D201 are compositionally biased toward basic and acidic residues. Composition is skewed to low complexity over residues S202–H213 and G340–S349.

As to expression, accumulates in maturing root cap cells, in both COL and LRC cells.

It localises to the nucleus. Its function is as follows. Transcription regulator. Together with BRN1 and BRN2, regulates cellular maturation of root cap. Represses stem cell-like divisions in the root cap daughter cells, and thus promotes daughter cell fate. Inhibits expression of its positive regulator FEZ in a feedback loop for controlled switches in cell division plane. Promotes the expression of genes involved in secondary cell walls (SCW) biosynthesis. The sequence is that of Protein SOMBRERO (SMB) from Arabidopsis thaliana (Mouse-ear cress).